We begin with the raw amino-acid sequence, 657 residues long: DNA ligase (657 aa).

NAD(+) is bound at residue 80-81 (SL). The active-site N6-AMP-lysine intermediate is the Lys-104. Residues Arg-125, Glu-159, and Lys-297 each contribute to the NAD(+) site. Residues Cys-386, Cys-389, Cys-406, and Cys-411 each contribute to the Zn(2+) site. One can recognise a BRCT domain in the interval 571–657 (QSEQIFENLN…EWLNNGVRPE (87 aa)).

Belongs to the NAD-dependent DNA ligase family. LigA subfamily. Mg(2+) is required as a cofactor. Mn(2+) serves as cofactor.

It catalyses the reaction NAD(+) + (deoxyribonucleotide)n-3'-hydroxyl + 5'-phospho-(deoxyribonucleotide)m = (deoxyribonucleotide)n+m + AMP + beta-nicotinamide D-nucleotide.. DNA ligase that catalyzes the formation of phosphodiester linkages between 5'-phosphoryl and 3'-hydroxyl groups in double-stranded DNA using NAD as a coenzyme and as the energy source for the reaction. It is essential for DNA replication and repair of damaged DNA. The protein is DNA ligase of Ruminiclostridium cellulolyticum (strain ATCC 35319 / DSM 5812 / JCM 6584 / H10) (Clostridium cellulolyticum).